The chain runs to 286 residues: Type II restriction enzyme NgoMIV (286 aa).

Mg(2+) is bound by residues D140 and C186.

As to quaternary structure, homotetramer. Mg(2+) serves as cofactor.

The catalysed reaction is Endonucleolytic cleavage of DNA to give specific double-stranded fragments with terminal 5'-phosphates.. A P subtype restriction enzyme that recognizes the double-stranded sequence 5'-GCCGGC-3' and cleaves after G-1. In Neisseria gonorrhoeae, this protein is Type II restriction enzyme NgoMIV (ngoMIVR).